Reading from the N-terminus, the 501-residue chain is uncharacterized protein (501 aa).

A BAR domain is found at 14 to 237; the sequence is EKFGFDRQKT…GFSKKRDNVN (224 aa). T285 bears the Phosphothreonine mark. 2 disordered regions span residues 302 to 321 and 329 to 414; these read IASS…DVSD and SAVD…RSYS. Residues 309–320 show a composition bias toward basic and acidic residues; sequence QHTEDNYNKDVS. A compositionally biased stretch (polar residues) spans 390-402; it reads SQCNVSPSPSNIS. S414 is subject to Phosphoserine. The region spanning 421–487 is the SH3 domain; it reads SSRKVVRMKY…PSNYCVPAHP (67 aa).

Its subcellular location is the cytoplasm. This is an uncharacterized protein from Schizosaccharomyces pombe (strain 972 / ATCC 24843) (Fission yeast).